The sequence spans 188 residues: Putative manganese efflux pump MntP (188 aa).

A run of 6 helical transmembrane segments spans residues 3 to 23 (ITAT…ASIG), 41 to 61 (LIFG…GMLA), 66 to 86 (LEWN…RMII), 107 to 129 (LLVT…LAFL), 143 to 163 (ATLI…PLLG), and 168 to 188 (ILGG…HFHG).

It belongs to the MntP (TC 9.B.29) family.

The protein localises to the cell inner membrane. In terms of biological role, probably functions as a manganese efflux pump. The sequence is that of Putative manganese efflux pump MntP from Citrobacter koseri (strain ATCC BAA-895 / CDC 4225-83 / SGSC4696).